The chain runs to 241 residues: Exosome complex component RRP41 homolog (241 aa).

Met-1 carries the N-acetylmethionine modification.

This sequence belongs to the RNase PH family. As to quaternary structure, component of the RNA exosome complex. Interacts with RPP4.

Its subcellular location is the cytoplasm. The protein resides in the nucleus. It is found in the nucleolus. In terms of biological role, non-catalytic component of the RNA exosome complex which has 3'-&gt;5' exoribonuclease activity and participates in a multitude of cellular RNA processing, maturation and degradation events. In vitro, is a processive phosphorolytic exonuclease and requires a single-stranded poly(A) tail on the substrate RNA for its activity. Can complement the growth defect of a yeast mutant lacking RRP41 exonuclease. Required for normal development of female gametophytes. The sequence is that of Exosome complex component RRP41 homolog from Arabidopsis thaliana (Mouse-ear cress).